The sequence spans 376 residues: GTPase Obg (376 aa).

Residues 2–161 (ASFVDEVLIR…RVVHVELRIV (160 aa)) enclose the Obg domain. The OBG-type G domain maps to 162–328 (ADVGFVGLPN…LQEAFVRLSD (167 aa)). GTP is bound by residues 168-175 (GLPNAGKS), 193-197 (FTTRI), 215-218 (DVPG), 282-285 (TKLD), and 309-311 (SVH). Positions 175 and 195 each coordinate Mg(2+).

The protein belongs to the TRAFAC class OBG-HflX-like GTPase superfamily. OBG GTPase family. Monomer. Mg(2+) serves as cofactor.

It localises to the cytoplasm. Functionally, an essential GTPase which binds GTP, GDP and possibly (p)ppGpp with moderate affinity, with high nucleotide exchange rates and a fairly low GTP hydrolysis rate. Plays a role in control of the cell cycle, stress response, ribosome biogenesis and in those bacteria that undergo differentiation, in morphogenesis control. In Treponema pallidum (strain Nichols), this protein is GTPase Obg.